The primary structure comprises 237 residues: UDP-2,3-diacylglucosamine hydrolase (237 aa).

Residues Asp-8, His-10, Asp-41, Asn-78, and His-113 each coordinate Mn(2+). Residue 78–79 coordinates substrate; it reads NR. Substrate-binding residues include Asp-121, Ser-159, Gln-164, and His-195. Mn(2+)-binding residues include His-195 and His-197.

This sequence belongs to the LpxH family. Requires Mn(2+) as cofactor.

It is found in the cell inner membrane. It carries out the reaction UDP-2-N,3-O-bis[(3R)-3-hydroxytetradecanoyl]-alpha-D-glucosamine + H2O = 2-N,3-O-bis[(3R)-3-hydroxytetradecanoyl]-alpha-D-glucosaminyl 1-phosphate + UMP + 2 H(+). Its pathway is glycolipid biosynthesis; lipid IV(A) biosynthesis; lipid IV(A) from (3R)-3-hydroxytetradecanoyl-[acyl-carrier-protein] and UDP-N-acetyl-alpha-D-glucosamine: step 4/6. Functionally, hydrolyzes the pyrophosphate bond of UDP-2,3-diacylglucosamine to yield 2,3-diacylglucosamine 1-phosphate (lipid X) and UMP by catalyzing the attack of water at the alpha-P atom. Involved in the biosynthesis of lipid A, a phosphorylated glycolipid that anchors the lipopolysaccharide to the outer membrane of the cell. The sequence is that of UDP-2,3-diacylglucosamine hydrolase from Chromobacterium violaceum (strain ATCC 12472 / DSM 30191 / JCM 1249 / CCUG 213 / NBRC 12614 / NCIMB 9131 / NCTC 9757 / MK).